A 503-amino-acid polypeptide reads, in one-letter code: Maturase K (503 aa).

The protein belongs to the intron maturase 2 family. MatK subfamily.

It localises to the plastid. The protein localises to the chloroplast. Its function is as follows. Usually encoded in the trnK tRNA gene intron. Probably assists in splicing its own and other chloroplast group II introns. The sequence is that of Maturase K from Caragana arborescens (Siberian pea tree).